The following is a 308-amino-acid chain: Putative S-adenosyl-L-methionine-dependent methyltransferase Mjls_1073 (308 aa).

Residues D133 and 162-163 (DL) contribute to the S-adenosyl-L-methionine site.

The protein belongs to the UPF0677 family.

Functionally, exhibits S-adenosyl-L-methionine-dependent methyltransferase activity. The chain is Putative S-adenosyl-L-methionine-dependent methyltransferase Mjls_1073 from Mycobacterium sp. (strain JLS).